We begin with the raw amino-acid sequence, 384 residues long: Polar flagellin C (384 aa).

Positions 317-347 form a coiled coil; it reads AKQNRLSHSINNLANIQENVDASNSRIKDTD.

Belongs to the bacterial flagellin family. As to quaternary structure, heteromer of multiple flagellin subunits including FlaA, FlaB/D, FlaC, FlaE and FlaF. Homomer of FlaC is not able to form a functional filament.

The protein resides in the secreted. Its subcellular location is the bacterial flagellum. In terms of biological role, flagellin is the subunit protein which polymerizes to form the filaments of bacterial flagella. FlaC is not essential for polar flagellar synthesis and swimming motility. Homomer of FlaC is not able to form a functional filament. This Vibrio parahaemolyticus serotype O3:K6 (strain RIMD 2210633) protein is Polar flagellin C (flaC).